Reading from the N-terminus, the 61-residue chain is Truncated Cytokine response-modifying protein B (61 aa).

The protein is truncated in this strain and presumably inactive. It has similarities with variola virus CrmB, but the product is inactivated due to several premature stop codon. This chain is Truncated Cytokine response-modifying protein B, found in Bos taurus (Bovine).